The sequence spans 47 residues: Delta-actitoxin-Aspp1a (47 aa).

Disulfide bonds link cysteine 4-cysteine 44, cysteine 6-cysteine 34, and cysteine 27-cysteine 45.

It belongs to the sea anemone sodium channel inhibitory toxin family. Type I subfamily.

The protein resides in the secreted. It localises to the nematocyst. Its function is as follows. Binds specifically to voltage-gated sodium channels (Nav) (site 3), thereby delaying their inactivation during signal transduction. Has a heart stimulation effect on isolated rat atria that is higher than that of Hk7a, Hk8a and Hk16a. This chain is Delta-actitoxin-Aspp1a, found in Anthopleura sp. (strain 'Zhanjiang') (Sea anemone).